Reading from the N-terminus, the 314-residue chain is tRNA dimethylallyltransferase (314 aa).

Glycine 11–threonine 18 lines the ATP pocket. Threonine 13 to threonine 18 lines the substrate pocket. Residues aspartate 36–glutamine 39 are interaction with substrate tRNA.

This sequence belongs to the IPP transferase family. As to quaternary structure, monomer. Requires Mg(2+) as cofactor.

The catalysed reaction is adenosine(37) in tRNA + dimethylallyl diphosphate = N(6)-dimethylallyladenosine(37) in tRNA + diphosphate. Functionally, catalyzes the transfer of a dimethylallyl group onto the adenine at position 37 in tRNAs that read codons beginning with uridine, leading to the formation of N6-(dimethylallyl)adenosine (i(6)A). This Bacillus anthracis protein is tRNA dimethylallyltransferase.